The following is a 298-amino-acid chain: UTP--glucose-1-phosphate uridylyltransferase (298 aa).

This sequence belongs to the UDPGP type 2 family.

The enzyme catalyses alpha-D-glucose 1-phosphate + UTP + H(+) = UDP-alpha-D-glucose + diphosphate. It functions in the pathway carbohydrate metabolism; nucleotide-sugar metabolism. The protein operates within capsule biogenesis; capsule polysaccharide biosynthesis. The sequence is that of UTP--glucose-1-phosphate uridylyltransferase (galF) from Klebsiella pneumoniae.